The chain runs to 88 residues: Molybdopterin synthase sulfur carrier subunit (88 aa).

Glycine 88 carries the post-translational modification 1-thioglycine; alternate. Glycine 88 is modified (glycyl adenylate; alternate).

This sequence belongs to the MoaD family. MOCS2A subfamily. Heterotetramer; composed of 2 small (MOCS2A) and 2 large (MOCS2B) subunits. Post-translationally, C-terminal thiocarboxylation occurs in 2 steps, it is first acyl-adenylated (-COAMP) via the hesA/moeB/thiF part of uba4, then thiocarboxylated (-COSH) via the rhodanese domain of uba4.

It localises to the cytoplasm. It participates in cofactor biosynthesis; molybdopterin biosynthesis. Functionally, acts as a sulfur carrier required for molybdopterin biosynthesis. Component of the molybdopterin synthase complex that catalyzes the conversion of precursor Z into molybdopterin by mediating the incorporation of 2 sulfur atoms into precursor Z to generate a dithiolene group. In the complex, serves as sulfur donor by being thiocarboxylated (-COSH) at its C-terminus by uba4. After interaction with MOCS2B, the sulfur is then transferred to precursor Z to form molybdopterin. The polypeptide is Molybdopterin synthase sulfur carrier subunit (Aspergillus niger (strain ATCC MYA-4892 / CBS 513.88 / FGSC A1513)).